The sequence spans 274 residues: MNKTAIALLALLASSASLAATPWQKITQPVPGSAQSIGSFSNGCIVGADTLPIQSEHYQVMRTDQRRYFGHPDLVMFIQRLSSQVSNLGMGTVLIGDMGMPAGGRFNGGHASHQTGLDVDIFLQLPKTRWTSAQLLRPQALDLVSRDGKHVVSTLWKPEIFSLIKLAAQDKDVTRIFVNPAIKQQLCLDAGTDRDWLRKVRPWFQHRAHMHVRLRCPADSLECEDQPLPPSGDGCGAELQSWFAPLKPGTTKPEKKTPPPLPPSCQALLDEHVI.

The first 19 residues, 1–19, serve as a signal peptide directing secretion; sequence MNKTAIALLALLASSASLA. Cystine bridges form between cysteine 44–cysteine 265, cysteine 187–cysteine 235, and cysteine 216–cysteine 223. Histidine 110, histidine 113, aspartate 120, aspartate 147, histidine 150, and histidine 211 together coordinate Zn(2+).

It belongs to the peptidase M74 family. Dimer. Zn(2+) is required as a cofactor.

The protein resides in the periplasm. Functionally, murein endopeptidase that cleaves the D-alanyl-meso-2,6-diamino-pimelyl amide bond that connects peptidoglycan strands. Likely plays a role in the removal of murein from the sacculus. The chain is Penicillin-insensitive murein endopeptidase from Shigella sonnei (strain Ss046).